Here is a 250-residue protein sequence, read N- to C-terminus: Sperm-egg fusion protein Juno (250 aa).

An N-terminal signal peptide occupies residues 1 to 19; it reads MACWWPLLLELWTVMPTWA. Cystine bridges form between C27–C55, C47–C95, C56–C99, C79–C172, C86–C143, C132–C206, C136–C186, and C149–C166. An important for interaction with IZUMO1 region spans residues 62-81; it reads WEAHLDVSPLYNFSLFHCGL. N-linked (GlcNAc...) asparagine glycosylation is present at N73. Residue S228 is the site of GPI-anchor amidated serine attachment. Residues 229 to 250 constitute a propeptide that is removed on maturation; it reads SAPSWELSYTIMVCSLFLPFLS.

It belongs to the folate receptor family. In terms of assembly, monomer. Interacts with IZUMO1; the interaction is direct. IZUMO1 and IZUMO1R/JUNO form a complex with 1:1 stoichiometry. Interacts with FCRL3/MAIA; FCRL3/MAIA replaces IZUMO1R/JUNO as IZUMO1 receptor after sperm-egg adhesion, thereby permitting species-specific gamete fusion. Interacts with WDR54. The protein is rapidly cleaved following fertilization, being only weakly detectable in zona-intact fertilized eggs at telophase II and undetectable at the pronuclear stage. Sheding is probably required to block to polyspermy and ensuring egg fusion with a single sperm. Expressed in unfertilized oocytes (at protein level).

Its subcellular location is the cell membrane. It is found in the cell projection. The protein localises to the microvillus membrane. In terms of biological role, receptor for IZUMO1 present at the cell surface of oocytes (oolemma), which is essential for species-specific gamete recognition and fertilization. The IZUMO1:IZUMO1R/JUNO interaction is a necessary adhesion event between sperm and egg that is required for fertilization but is not sufficient for cell fusion. The ligand-receptor interaction probably does not act as a membrane 'fusogen'. Does not bind folate. In Homo sapiens (Human), this protein is Sperm-egg fusion protein Juno.